The following is a 100-amino-acid chain: Carboxysome shell vertex protein CcmL (100 aa).

One can recognise a BMV domain in the interval 1–83 (MQLAKVLGTV…LDAMVVGIID (83 aa)).

It belongs to the CcmL/EutN family. CcmL subfamily. As to quaternary structure, homopentamer. Interacts with full-length CcmM.

The protein resides in the carboxysome. Its function is as follows. Probably forms vertices in the carboxysome, a polyhedral inclusion where RuBisCO (ribulose bisphosphate carboxylase, rbcL-rbcS) is sequestered. Has been modeled to induce curvature upon insertion into an otherwise flat hexagonal molecular layer of CcmK subunits. This Synechocystis sp. (strain ATCC 27184 / PCC 6803 / Kazusa) protein is Carboxysome shell vertex protein CcmL.